We begin with the raw amino-acid sequence, 225 residues long: DNA repair protein RecO (225 aa).

It belongs to the RecO family.

Its function is as follows. Involved in DNA repair and RecF pathway recombination. The chain is DNA repair protein RecO from Clostridium perfringens (strain ATCC 13124 / DSM 756 / JCM 1290 / NCIMB 6125 / NCTC 8237 / Type A).